The primary structure comprises 139 residues: Putative pre-16S rRNA nuclease (139 aa).

The protein belongs to the YqgF nuclease family.

It localises to the cytoplasm. In terms of biological role, could be a nuclease involved in processing of the 5'-end of pre-16S rRNA. This is Putative pre-16S rRNA nuclease from Thermoanaerobacter pseudethanolicus (strain ATCC 33223 / 39E) (Clostridium thermohydrosulfuricum).